A 428-amino-acid polypeptide reads, in one-letter code: Glucose-1-phosphate adenylyltransferase (428 aa).

Alpha-D-glucose 1-phosphate-binding positions include Tyr-114, Gly-179, 194–195, and Ser-212; that span reads EK.

It belongs to the bacterial/plant glucose-1-phosphate adenylyltransferase family. Homotetramer.

The enzyme catalyses alpha-D-glucose 1-phosphate + ATP + H(+) = ADP-alpha-D-glucose + diphosphate. Its pathway is glycan biosynthesis; glycogen biosynthesis. In terms of biological role, involved in the biosynthesis of ADP-glucose, a building block required for the elongation reactions to produce glycogen. Catalyzes the reaction between ATP and alpha-D-glucose 1-phosphate (G1P) to produce pyrophosphate and ADP-Glc. This Yersinia pseudotuberculosis serotype IB (strain PB1/+) protein is Glucose-1-phosphate adenylyltransferase.